The primary structure comprises 545 residues: Chaperonin GroEL 1 (545 aa).

Residues 30–33 (TLGP), Lys51, 87–91 (DGTTT), Gly415, and Asp495 each bind ATP.

This sequence belongs to the chaperonin (HSP60) family. Forms a cylinder of 14 subunits composed of two heptameric rings stacked back-to-back. Interacts with the co-chaperonin GroES.

It is found in the cytoplasm. It carries out the reaction ATP + H2O + a folded polypeptide = ADP + phosphate + an unfolded polypeptide.. Functionally, together with its co-chaperonin GroES, plays an essential role in assisting protein folding. The GroEL-GroES system forms a nano-cage that allows encapsulation of the non-native substrate proteins and provides a physical environment optimized to promote and accelerate protein folding. The sequence is that of Chaperonin GroEL 1 from Sinorhizobium medicae (strain WSM419) (Ensifer medicae).